Reading from the N-terminus, the 124-residue chain is uncharacterized protein (124 aa).

It belongs to the asfivirus H124R family.

It localises to the virion. This is an uncharacterized protein from Ornithodoros (relapsing fever ticks).